Consider the following 208-residue polypeptide: Endoplasmic reticulum vesicle protein 25 (208 aa).

The signal sequence occupies residues 1 to 15; the sequence is MKFLLLLLLAPFISA. Residues 16 to 177 are Lumenal-facing; it reads LRFDLKAESK…TNESTNERVR (162 aa). Residues 28 to 118 enclose the GOLD domain; that stretch reads QMCIRDFVSE…KRAIELDIES (91 aa). The chain crosses the membrane as a helical span at residues 178 to 198; it reads NFSVLVIIVLTSLGAWQVNYL. The Cytoplasmic segment spans residues 199-208; that stretch reads KNYFKSKHII.

This sequence belongs to the EMP24/GP25L family.

The protein localises to the endoplasmic reticulum membrane. It is found in the golgi apparatus membrane. Functionally, constituent of COPII-coated endoplasmic reticulum-derived transport vesicles. Required for efficient transport of a subset of secretory proteins to the Golgi. Facilitates retrograde transport from the Golgi to the endoplasmic reticulum. This Candida glabrata (strain ATCC 2001 / BCRC 20586 / JCM 3761 / NBRC 0622 / NRRL Y-65 / CBS 138) (Yeast) protein is Endoplasmic reticulum vesicle protein 25 (ERV25).